A 147-amino-acid chain; its full sequence is UPF0306 protein YhbP (147 aa).

This sequence belongs to the UPF0306 family.

The sequence is that of UPF0306 protein YhbP from Shigella boydii serotype 4 (strain Sb227).